The primary structure comprises 145 residues: uncharacterized protein (145 aa).

The protein belongs to the asfivirus K145R family.

Its subcellular location is the virion. This is an uncharacterized protein from African swine fever virus (isolate Tick/South Africa/Pretoriuskop Pr4/1996) (ASFV).